A 732-amino-acid chain; its full sequence is Polyphosphate kinase (732 aa).

An ATP-binding site is contributed by N61. Mg(2+)-binding residues include R417 and R447. H477 acts as the Phosphohistidine intermediate in catalysis. ATP contacts are provided by Y510, R606, and H634. Positions 699-718 (DGTYRQRQPAPGEAERGTHS) are disordered.

The protein belongs to the polyphosphate kinase 1 (PPK1) family. The cofactor is Mg(2+). In terms of processing, an intermediate of this reaction is the autophosphorylated ppk in which a phosphate is covalently linked to a histidine residue through a N-P bond.

It carries out the reaction [phosphate](n) + ATP = [phosphate](n+1) + ADP. In terms of biological role, catalyzes the reversible transfer of the terminal phosphate of ATP to form a long-chain polyphosphate (polyP). This is Polyphosphate kinase from Thermosynechococcus vestitus (strain NIES-2133 / IAM M-273 / BP-1).